We begin with the raw amino-acid sequence, 354 residues long: Serine/threonine-protein phosphatase 2A activator 2 (354 aa).

It belongs to the PTPA-type PPIase family.

The protein resides in the cytoplasm. It catalyses the reaction [protein]-peptidylproline (omega=180) = [protein]-peptidylproline (omega=0). Its function is as follows. PPIases accelerate the folding of proteins. It catalyzes the cis-trans isomerization of proline imidic peptide bonds in oligopeptides. Acts as a regulatory subunit for PP2A-like phosphatases modulating their activity or substrate specificity, probably by inducing a conformational change in the catalytic subunit, a direct target of the PPIase. Can reactivate inactive phosphatase PP2A-phosphatase methylesterase complexes (PP2Ai) in presence of ATP and Mg(2+) by dissociating the inactive form from the complex. The chain is Serine/threonine-protein phosphatase 2A activator 2 (RRD2) from Yarrowia lipolytica (strain CLIB 122 / E 150) (Yeast).